The primary structure comprises 842 residues: Glycogen phosphorylase, muscle form (842 aa).

Ser-2 bears the N-acetylserine mark. Ser-15 bears the Phosphoserine; by PHK; in form phosphorylase A mark. Positions 43 and 76 each coordinate AMP. A phosphotyrosine mark is found at Tyr-204 and Tyr-227. 310–319 (RRFKSSKFGC) contacts AMP. At Ser-430 the chain carries Phosphoserine. The residue at position 473 (Tyr-473) is a Phosphotyrosine. The residue at position 681 (Lys-681) is an N6-(pyridoxal phosphate)lysine. Ser-747 and Ser-748 each carry phosphoserine.

The protein belongs to the glycogen phosphorylase family. In terms of assembly, homodimer. Homotetramer; to form the enzymatically active phosphorylase A. Pyridoxal 5'-phosphate is required as a cofactor. In terms of processing, phosphorylation of Ser-15 converts phosphorylase B (unphosphorylated) to phosphorylase A.

It carries out the reaction [(1-&gt;4)-alpha-D-glucosyl](n) + phosphate = [(1-&gt;4)-alpha-D-glucosyl](n-1) + alpha-D-glucose 1-phosphate. Allosterically regulated through the non-covalent binding of metabolites, being activated by AMP and inhibited by ATP, ADP, and glucose-6-phosphate. The activity is also controlled by post-translational modifications including phosphorylation. Allosteric enzyme that catalyzes the rate-limiting step in glycogen catabolism, the phosphorolytic cleavage of glycogen to produce glucose-1-phosphate, and plays a central role in maintaining cellular and organismal glucose homeostasis. This Ovis aries (Sheep) protein is Glycogen phosphorylase, muscle form.